A 359-amino-acid chain; its full sequence is 4-galactosyl-N-acetylglucosaminide 3-alpha-L-fucosyltransferase FUT6 (359 aa).

Over 1–14 (MDPLGPAKTQWSWR) the chain is Cytoplasmic. Residues 15 to 34 (CCLTALLFQLLVAVCFFSYL) traverse the membrane as a helical; Signal-anchor for type II membrane protein segment. Residues 35-359 (RVSRDDPTVY…QTRSIAAWFT (325 aa)) are Lumenal-facing. Residues 73–112 (KPIALPRCSEMVPGTADCNITADRKVYPQADAVIVHHREV) are determines site-specific fucosylation. 3 N-linked (GlcNAc...) asparagine glycosylation sites follow: Asn91, Asn153, and Asn184.

It belongs to the glycosyltransferase 10 family. In terms of assembly, homodimer and monomer. Monomer (secreted form). N-glycosylated. In terms of processing, proteolytic cleavage releases a secreted glycoform of 43 kDa.

It is found in the golgi apparatus. It localises to the golgi stack membrane. The protein localises to the secreted. The catalysed reaction is a beta-D-galactosyl-(1-&gt;4)-N-acetyl-beta-D-glucosaminyl derivative + GDP-beta-L-fucose = a beta-D-galactosyl-(1-&gt;4)-[alpha-L-fucosyl-(1-&gt;3)]-N-acetyl-beta-D-glucosaminyl derivative + GDP + H(+). It carries out the reaction an N-acetyl-alpha-neuraminyl-(2-&gt;3)-beta-D-galactosyl-(1-&gt;4)-N-acetyl-beta-D-glucosaminyl derivative + GDP-beta-L-fucose = an alpha-Neu5Ac-(2-&gt;3)-beta-D-Gal-(1-&gt;4)-[alpha-L-Fuc-(1-&gt;3)]-beta-D-GlcNAc derivative + GDP + H(+). It catalyses the reaction an alpha-Neu5Ac-(2-&gt;3)-beta-D-Gal-(1-&gt;4)-beta-D-GlcNAc-(1-&gt;3)-beta-D-Gal-(1-&gt;4)-[alpha-L-Fuc-(1-&gt;3)]-beta-D-GlcNAc derivative + GDP-beta-L-fucose = an alpha-Neu5Ac-(2-&gt;3)-beta-D-Gal-(1-&gt;4)-[alpha-L-Fuc-(1-&gt;3)]-beta-D-GlcNAc-(1-&gt;3)-beta-D-Gal-(1-&gt;4)-[alpha-L-Fuc-(1-&gt;3)]-beta-D-GlcNAc derivative + GDP + H(+). The enzyme catalyses a neolactoside nLc6Cer + GDP-beta-L-fucose = beta-D-Gal-(1-&gt;4)-[alpha-L-Fuc-(1-&gt;3)]-beta-D-GlcNAc-(1-&gt;3)-beta-D-Gal-(1-&gt;4)-beta-D-GlcNAc-(1-&gt;3)-beta-D-Gal-(1-&gt;4)-beta-D-Glc-(1&lt;-&gt;1')-Cer + GDP + H(+). The catalysed reaction is a neolactoside nLc6Cer + GDP-beta-L-fucose = beta-D-galactosyl-(1-&gt;4)-N-acetyl-beta-D-glucosaminyl-(1-&gt;3)-beta-D-galactosyl-(1-&gt;4)-[alpha-L-fucosyl-(1-&gt;3)]-N-acetyl-beta-D-glucosaminyl-(1-&gt;3)-beta-D-galactosyl-(1-&gt;4)-beta-D-glucosyl-(1&lt;-&gt;1')-ceramide + GDP + H(+). It carries out the reaction a neolactoside VI(3)-alpha-NeuNAc-nLc6Cer + GDP-beta-L-fucose = a neolactoside VI(3)-alpha-NeuAc,V(3)-alphaFuc-nLc6Cer + GDP + H(+). It catalyses the reaction beta-D-galactosyl-(1-&gt;4)-N-acetyl-D-glucosamine + GDP-beta-L-fucose = beta-D-galactosyl-(1-&gt;4)-[alpha-L-fucosyl-(1-&gt;3)]-N-acetyl-D-glucosamine + GDP + H(+). The enzyme catalyses N-acetyl-alpha-neuraminosyl-(2-&gt;3)-beta-D-galactosyl-(1-&gt;4)-N-acetyl-beta-D-glucosamine + GDP-beta-L-fucose = N-acetyl-alpha-neuraminosyl-(2-&gt;3)-beta-D-galactosyl-(1-&gt;4)-[alpha-L-fucosyl-(1-&gt;3)]-N-acetyl-beta-D-glucosamine + GDP + H(+). The catalysed reaction is lactose + GDP-beta-L-fucose = beta-D-galactosyl-(1-&gt;4)-[alpha-L-fucosyl-(1-&gt;3)]-D-glucose + GDP + H(+). It carries out the reaction alpha-L-Fuc-(1-&gt;2)-beta-D-Gal-(1-&gt;4)-D-Glc + GDP-beta-L-fucose = alpha-L-Fuc-(1-&gt;2)-beta-D-Gal-(1-&gt;4)-[alpha-L-Fuc-(1-&gt;3)]-D-Glc + GDP + H(+). It catalyses the reaction a beta-D-galactosyl-(1-&gt;4)-N-acetyl-beta-D-6-sulfooxy-glucosaminyl derivative + GDP-beta-L-fucose = a beta-D-galactosyl-(1-&gt;4)-[alpha-L-fucosyl-(1-&gt;3)]-N-acetyl-beta-D-6-sulfooxy-glucosaminyl derivative + GDP + H(+). It functions in the pathway protein modification; protein glycosylation. Functionally, catalyzes the transfer of L-fucose, from a guanosine diphosphate-beta-L-fucose, to the N-acetyl glucosamine (GlcNAc) of a distal alpha2,3 sialylated lactosamine unit of a glycoprotein- or glycolipid-linked sialopolylactosamines chain or of a distal or internal lactosamine unit of a neutral glycoprotein- or glycolipid-linked polylactosamines chain through an alpha-1,3 glycosidic linkage and participates in surface expression of the sialyl Lewis X (sLe(x)), Lewis X (Le(x)) and non sialylated VIM2 determinants. Moreover transfers fucose to H-type 2 (Fucalpha1-2Galbeta1-4GlcNAc) chain acceptor substrates and participates in difucosylated sialyl Lewis x determinants. Also fucosylates a polylactosamine substrate having a 6 sulfate modification at the GlcNAc moiety and gives rise to sialyl and non-sialyl 6-sulfo lewis X. Does not have activity towards type 1 ((Galbeta1-3GlcNAc)) and H-type 1 chain (Fucalpha1-2Galbeta1-3GlcNAc) acceptors substrates. In Pongo pygmaeus (Bornean orangutan), this protein is 4-galactosyl-N-acetylglucosaminide 3-alpha-L-fucosyltransferase FUT6.